The sequence spans 294 residues: Formamidopyrimidine-DNA glycosylase (294 aa).

The Schiff-base intermediate with DNA role is filled by Pro2. The Proton donor role is filled by Glu3. Lys61 (proton donor; for beta-elimination activity) is an active-site residue. DNA contacts are provided by His104, Arg123, and Lys169. The segment at 255 to 289 adopts an FPG-type zinc-finger fold; it reads AVYGRQDEPCRRCGAPIVREKFMNRSSYSCPRCQP. The active-site Proton donor; for delta-elimination activity is the Arg279.

The protein belongs to the FPG family. Monomer. Requires Zn(2+) as cofactor.

It catalyses the reaction Hydrolysis of DNA containing ring-opened 7-methylguanine residues, releasing 2,6-diamino-4-hydroxy-5-(N-methyl)formamidopyrimidine.. The enzyme catalyses 2'-deoxyribonucleotide-(2'-deoxyribose 5'-phosphate)-2'-deoxyribonucleotide-DNA = a 3'-end 2'-deoxyribonucleotide-(2,3-dehydro-2,3-deoxyribose 5'-phosphate)-DNA + a 5'-end 5'-phospho-2'-deoxyribonucleoside-DNA + H(+). Functionally, involved in base excision repair of DNA damaged by oxidation or by mutagenic agents. Acts as a DNA glycosylase that recognizes and removes damaged bases. Has a preference for oxidized purines, such as 7,8-dihydro-8-oxoguanine (8-oxoG). Has AP (apurinic/apyrimidinic) lyase activity and introduces nicks in the DNA strand. Cleaves the DNA backbone by beta-delta elimination to generate a single-strand break at the site of the removed base with both 3'- and 5'-phosphates. This chain is Formamidopyrimidine-DNA glycosylase, found in Nocardia farcinica (strain IFM 10152).